A 477-amino-acid polypeptide reads, in one-letter code: D-alanyl-D-alanine carboxypeptidase DacB (477 aa).

A signal peptide spans M1–A20. The active-site Acyl-ester intermediate is S62. Catalysis depends on K65, which acts as the Proton acceptor. Residues G90–L263 are absent in class-A beta-lactamases. Residue S306 is part of the active site. K417 contributes to the substrate binding site.

This sequence belongs to the peptidase S13 family.

Its subcellular location is the periplasm. The enzyme catalyses Preferential cleavage: (Ac)2-L-Lys-D-Ala-|-D-Ala. Also transpeptidation of peptidyl-alanyl moieties that are N-acyl substituents of D-alanine.. It participates in cell wall biogenesis; peptidoglycan biosynthesis. Functionally, not involved in transpeptidation but exclusively catalyzes a DD-carboxypeptidase and DD-endopeptidase reaction. The protein is D-alanyl-D-alanine carboxypeptidase DacB (dacB) of Escherichia coli (strain K12).